A 90-amino-acid chain; its full sequence is UPF0237 protein NMA1909 (90 aa).

Positions 5 to 83 constitute an ACT domain; it reads VITVIGKDRV…LDIRMQNEEI (79 aa).

It belongs to the UPF0237 family.

The protein is UPF0237 protein NMA1909 of Neisseria meningitidis serogroup A / serotype 4A (strain DSM 15465 / Z2491).